We begin with the raw amino-acid sequence, 152 residues long: Large ribosomal subunit protein bL9 (152 aa).

It belongs to the bacterial ribosomal protein bL9 family.

In terms of biological role, binds to the 23S rRNA. The protein is Large ribosomal subunit protein bL9 of Synechococcus sp. (strain CC9311).